The primary structure comprises 118 residues: Large ribosomal subunit protein bL20 (118 aa).

The protein belongs to the bacterial ribosomal protein bL20 family.

In terms of biological role, binds directly to 23S ribosomal RNA and is necessary for the in vitro assembly process of the 50S ribosomal subunit. It is not involved in the protein synthesizing functions of that subunit. The sequence is that of Large ribosomal subunit protein bL20 from Caulobacter vibrioides (strain ATCC 19089 / CIP 103742 / CB 15) (Caulobacter crescentus).